The following is a 102-amino-acid chain: Phosphoribosyl-ATP pyrophosphatase (102 aa).

It belongs to the PRA-PH family.

The protein localises to the cytoplasm. The catalysed reaction is 1-(5-phospho-beta-D-ribosyl)-ATP + H2O = 1-(5-phospho-beta-D-ribosyl)-5'-AMP + diphosphate + H(+). It participates in amino-acid biosynthesis; L-histidine biosynthesis; L-histidine from 5-phospho-alpha-D-ribose 1-diphosphate: step 2/9. The chain is Phosphoribosyl-ATP pyrophosphatase from Jannaschia sp. (strain CCS1).